The sequence spans 178 residues: Crossover junction endodeoxyribonuclease RuvC (178 aa).

Catalysis depends on residues aspartate 7, glutamate 68, and aspartate 141. Aspartate 7, glutamate 68, and aspartate 141 together coordinate Mg(2+).

It belongs to the RuvC family. In terms of assembly, homodimer which binds Holliday junction (HJ) DNA. The HJ becomes 2-fold symmetrical on binding to RuvC with unstacked arms; it has a different conformation from HJ DNA in complex with RuvA. In the full resolvosome a probable DNA-RuvA(4)-RuvB(12)-RuvC(2) complex forms which resolves the HJ. The cofactor is Mg(2+).

It localises to the cytoplasm. The enzyme catalyses Endonucleolytic cleavage at a junction such as a reciprocal single-stranded crossover between two homologous DNA duplexes (Holliday junction).. In terms of biological role, the RuvA-RuvB-RuvC complex processes Holliday junction (HJ) DNA during genetic recombination and DNA repair. Endonuclease that resolves HJ intermediates. Cleaves cruciform DNA by making single-stranded nicks across the HJ at symmetrical positions within the homologous arms, yielding a 5'-phosphate and a 3'-hydroxyl group; requires a central core of homology in the junction. The consensus cleavage sequence is 5'-(A/T)TT(C/G)-3'. Cleavage occurs on the 3'-side of the TT dinucleotide at the point of strand exchange. HJ branch migration catalyzed by RuvA-RuvB allows RuvC to scan DNA until it finds its consensus sequence, where it cleaves and resolves the cruciform DNA. This Parafrankia sp. (strain EAN1pec) protein is Crossover junction endodeoxyribonuclease RuvC.